Consider the following 763-residue polypeptide: Endothelin-converting enzyme 2 (763 aa).

Residues 1–60 (MNVALHELGGGGSMVEYKRAKLRDEESPEITVEGRATRDSLEVGFQKRTRQLFGSHTQLE) lie on the Cytoplasmic side of the membrane. S27 carries the phosphoserine modification. A helical; Signal-anchor for type II membrane protein membrane pass occupies residues 61–81 (LVLAGLILVLAALLLGCLVAL). The Lumenal portion of the chain corresponds to 82–763 (WVHRDPAHST…MNPGQLCEVW (682 aa)). The 673-residue stretch at 91-763 (TCVTEACIRV…MNPGQLCEVW (673 aa)) folds into the Peptidase M13 domain. Intrachain disulfides connect C92–C97, C115–C748, C123–C708, C179–C428, and C637–C760. 7 N-linked (GlcNAc...) asparagine glycosylation sites follow: N159, N163, N204, N264, N309, N376, and N532. Zn(2+) is bound at residue H600. The active site involves E601. H604 serves as a coordination point for Zn(2+). N-linked (GlcNAc...) asparagine glycans are attached at residues N625 and N633. E660 is a binding site for Zn(2+). The Proton donor role is filled by D664.

The protein belongs to the peptidase M13 family. Requires Zn(2+) as cofactor.

The protein localises to the golgi apparatus membrane. The protein resides in the cytoplasmic vesicle. It localises to the secretory vesicle membrane. The catalysed reaction is Hydrolysis of the 21-Trp-|-Val-22 bond in big endothelin to form endothelin 1.. In terms of biological role, converts big endothelin-1 to endothelin-1. Also involved in the processing of various neuroendocrine peptides, including neurotensin, angiotensin I, substance P, proenkephalin-derived peptides, and prodynorphin-derived peptides. May play a role in amyloid-beta processing. In Mus musculus (Mouse), this protein is Endothelin-converting enzyme 2.